The chain runs to 241 residues: Pyridoxal phosphate phosphatase PHOSPHO2 (241 aa).

Residue aspartate 8 is the Nucleophile of the active site. The Mg(2+) site is built by aspartate 8 and aspartate 10. Aspartate 10 acts as the Proton donor in catalysis. Residues aspartate 19 and aspartate 99 each contribute to the substrate site. Residue aspartate 179 coordinates Mg(2+).

It belongs to the HAD-like hydrolase superfamily. PHOSPHO family. It depends on Mg(2+) as a cofactor.

The catalysed reaction is pyridoxal 5'-phosphate + H2O = pyridoxal + phosphate. Functionally, phosphatase that has high activity toward pyridoxal 5'-phosphate (PLP). Also active at much lower level toward pyrophosphate, phosphoethanolamine (PEA), phosphocholine (PCho), phospho-l-tyrosine, fructose-6-phosphate, p-nitrophenyl phosphate, and h-glycerophosphate. The chain is Pyridoxal phosphate phosphatase PHOSPHO2 (PHOSPHO2) from Homo sapiens (Human).